We begin with the raw amino-acid sequence, 264 residues long: Thymidylate synthase (264 aa).

Residues R21 and 126-127 contribute to the dUMP site; that span reads RR. C146 functions as the Nucleophile in the catalytic mechanism. DUMP-binding positions include 166–169, N177, and 207–209; these read RSAD and HLY. D169 is a (6R)-5,10-methylene-5,6,7,8-tetrahydrofolate binding site. A263 lines the (6R)-5,10-methylene-5,6,7,8-tetrahydrofolate pocket.

The protein belongs to the thymidylate synthase family. Bacterial-type ThyA subfamily. Homodimer.

The protein localises to the cytoplasm. It carries out the reaction dUMP + (6R)-5,10-methylene-5,6,7,8-tetrahydrofolate = 7,8-dihydrofolate + dTMP. Its pathway is pyrimidine metabolism; dTTP biosynthesis. Its function is as follows. Catalyzes the reductive methylation of 2'-deoxyuridine-5'-monophosphate (dUMP) to 2'-deoxythymidine-5'-monophosphate (dTMP) while utilizing 5,10-methylenetetrahydrofolate (mTHF) as the methyl donor and reductant in the reaction, yielding dihydrofolate (DHF) as a by-product. This enzymatic reaction provides an intracellular de novo source of dTMP, an essential precursor for DNA biosynthesis. The protein is Thymidylate synthase of Nitrobacter hamburgensis (strain DSM 10229 / NCIMB 13809 / X14).